The chain runs to 69 residues: UPF0437 protein AZC_3451 (69 aa).

The protein belongs to the UPF0437 family.

This is UPF0437 protein AZC_3451 from Azorhizobium caulinodans (strain ATCC 43989 / DSM 5975 / JCM 20966 / LMG 6465 / NBRC 14845 / NCIMB 13405 / ORS 571).